Consider the following 325-residue polypeptide: Beta-ketoacyl-[acyl-carrier-protein] synthase III (325 aa).

Active-site residues include C119 and H252. The ACP-binding stretch occupies residues 253 to 257; that stretch reads QANIR. The active site involves N282.

This sequence belongs to the thiolase-like superfamily. FabH family. In terms of assembly, homodimer.

The protein localises to the cytoplasm. It catalyses the reaction malonyl-[ACP] + acetyl-CoA + H(+) = 3-oxobutanoyl-[ACP] + CO2 + CoA. It participates in lipid metabolism; fatty acid biosynthesis. In terms of biological role, catalyzes the condensation reaction of fatty acid synthesis by the addition to an acyl acceptor of two carbons from malonyl-ACP. Catalyzes the first condensation reaction which initiates fatty acid synthesis and may therefore play a role in governing the total rate of fatty acid production. Possesses both acetoacetyl-ACP synthase and acetyl transacylase activities. Its substrate specificity determines the biosynthesis of branched-chain and/or straight-chain of fatty acids. The polypeptide is Beta-ketoacyl-[acyl-carrier-protein] synthase III (Verminephrobacter eiseniae (strain EF01-2)).